The chain runs to 265 residues: Pyrroline-5-carboxylate reductase (265 aa).

Belongs to the pyrroline-5-carboxylate reductase family.

It localises to the cytoplasm. It carries out the reaction L-proline + NADP(+) = (S)-1-pyrroline-5-carboxylate + NADPH + 2 H(+). The catalysed reaction is L-proline + NAD(+) = (S)-1-pyrroline-5-carboxylate + NADH + 2 H(+). It functions in the pathway amino-acid biosynthesis; L-proline biosynthesis; L-proline from L-glutamate 5-semialdehyde: step 1/1. In terms of biological role, catalyzes the reduction of 1-pyrroline-5-carboxylate (PCA) to L-proline. This Aquifex aeolicus (strain VF5) protein is Pyrroline-5-carboxylate reductase.